Here is a 371-residue protein sequence, read N- to C-terminus: Deoxyuridine 5'-triphosphate nucleotidohydrolase (371 aa).

Substrate contacts are provided by residues 260 to 262 (RSS) and 366 to 367 (FG). Residues 350-371 (NEFDAEAPPSERGTGGFGSTGI) form a disordered region. Residues 362 to 371 (GTGGFGSTGI) show a composition bias toward gly residues.

Belongs to the dUTPase family. Mg(2+) is required as a cofactor.

It carries out the reaction dUTP + H2O = dUMP + diphosphate + H(+). Functionally, involved in nucleotide metabolism: produces dUMP, the immediate precursor of thymidine nucleotides and decreases the intracellular concentration of dUTP to avoid uracil incorporation into viral DNA. This is Deoxyuridine 5'-triphosphate nucleotidohydrolase from Homo sapiens (Human).